Reading from the N-terminus, the 264-residue chain is Short chain dehydrogenase CPUR_05429 (264 aa).

Ile24, Asp70, Asn97, and Arg130 together coordinate NADP(+). Active-site proton donor residues include Ser146 and Ser147. NADP(+)-binding residues include Tyr161, Lys165, and Thr196. Catalysis depends on Tyr161, which acts as the Proton acceptor. The Lowers pKa of active site Tyr role is filled by Lys165.

Belongs to the short-chain dehydrogenases/reductases (SDR) family.

It participates in pigment biosynthesis. Functionally, short chain dehydrogenase; part of the ergochrome gene cluster responsible for the typical purple-black color of the ergot sclerotia. The ergochrome gene cluster produces several ergot pigments including the yellow ergochrome secalonic acid and its derivatives, as well as the red anthraquinones endocrocin and clavorubin. The pathway begins with the synthesis of atrochrysone thioester by the polyketide synthase (PKS) CPUR_05437. The atrochrysone carboxyl ACP thioesterase CPUR_05436 then breaks the thioester bond and releases the atrochrysone carboxylic acid from CPUR_05437. The atrochrysone carboxylic acid is then converted to atrochrysone which is further transformed into emodin anthrone. The next step is performed by the anthrone oxygenase CPUR_05434 that catalyzes the oxidation of emodinanthrone to emodin. Emodin is further modified to yield monodictyphenone via several steps involving CPUR_05427, CPUR_05428, CPUR_05429 and CPUR_05430. The short chain dehydrogenase/reductase CPUR_05418 then catalyzes the C-5 ketoreduction to give the xanthone skeleton of the monomeric units. Ergochromes formation requires further dimerization steps of different xanthone units, probably catalyzed by the cytochrome P450 monooxygenase CPUR_05419. CPUR_05425, CPUR_05426 and CPUR_05431 are unique to Claviceps, thus it is likely that they are involved in further modification of xanthone units or in their dimerization. The yellow ergochromes and the red anthraquinone pigments endocrocin and clavorubin are products from the same PKS derived precursors and the latter are likely shunt products in the pathway of xanthone biosynthesis. It is proposed that atrochrysone carboxylic acid released from the PKS CPUR_05437 can also be converted to endocrocin anthrone which is further oxidized into endocrocin by CPUR_05435. Endocrocin could be then modified to clavorubin, possibly by CPUR_05423 and CPUR_05431. Clavorubin is the principal anthraquinone metabolite produced by the cluster with a much higher yield compared to endocrocin. This is Short chain dehydrogenase CPUR_05429 from Claviceps purpurea (strain 20.1) (Ergot fungus).